Reading from the N-terminus, the 388-residue chain is LL-diaminopimelate aminotransferase (388 aa).

The substrate site is built by Tyr16 and Gly41. Pyridoxal 5'-phosphate is bound by residues Tyr70, 104 to 105 (SK), Tyr129, Asn179, Tyr210, and 239 to 241 (SLS). Substrate is bound by residues Lys105, Tyr129, and Asn179. Lys242 is subject to N6-(pyridoxal phosphate)lysine. Residue Arg250 coordinates pyridoxal 5'-phosphate. Arg368 contributes to the substrate binding site.

The protein belongs to the class-I pyridoxal-phosphate-dependent aminotransferase family. LL-diaminopimelate aminotransferase subfamily. As to quaternary structure, homodimer. Requires pyridoxal 5'-phosphate as cofactor.

It carries out the reaction (2S,6S)-2,6-diaminopimelate + 2-oxoglutarate = (S)-2,3,4,5-tetrahydrodipicolinate + L-glutamate + H2O + H(+). It functions in the pathway amino-acid biosynthesis; L-lysine biosynthesis via DAP pathway; LL-2,6-diaminopimelate from (S)-tetrahydrodipicolinate (aminotransferase route): step 1/1. In terms of biological role, involved in the synthesis of meso-diaminopimelate (m-DAP or DL-DAP), required for both lysine and peptidoglycan biosynthesis. Catalyzes the direct conversion of tetrahydrodipicolinate to LL-diaminopimelate. The sequence is that of LL-diaminopimelate aminotransferase from Nitratidesulfovibrio vulgaris (strain DP4) (Desulfovibrio vulgaris).